A 72-amino-acid polypeptide reads, in one-letter code: MKKDLHPDYHVINVVMTNGTTFQTKSTWGKEGDTINLDIDPTSHPAWTGGNQHLLDRGGRVSRFKDKFKGFA.

The protein belongs to the bacterial ribosomal protein bL31 family. Type A subfamily. Part of the 50S ribosomal subunit.

Its function is as follows. Binds the 23S rRNA. This is Large ribosomal subunit protein bL31 from Maricaulis maris (strain MCS10) (Caulobacter maris).